Reading from the N-terminus, the 351-residue chain is Columbamine O-methyltransferase (351 aa).

The S-adenosyl-L-methionine site is built by Gly198, Asp221, Asp241, Met242, and Lys255. The Proton acceptor role is filled by His259.

It belongs to the class I-like SAM-binding methyltransferase superfamily. Cation-independent O-methyltransferase family. COMT subfamily. In terms of assembly, homodimer.

The catalysed reaction is columbamine + S-adenosyl-L-methionine = palmatine + S-adenosyl-L-homocysteine + H(+). It carries out the reaction (S)-tetrahydrocolumbamine + S-adenosyl-L-methionine = (S)-tetrahydropalmatine + S-adenosyl-L-homocysteine + H(+). Its pathway is alkaloid biosynthesis; palmatine biosynthesis; palmatine from columbamine: step 1/1. Catalyzes the conversion of tetrahydrocolumbamine to (S)-tetrahydropalmatine and of columbamine to palmatine, an isoquinoline alkaloid. The polypeptide is Columbamine O-methyltransferase (Coptis japonica (Japanese goldthread)).